The following is a 316-amino-acid chain: Pentatricopeptide repeat-containing protein At1g19525 (316 aa).

PPR repeat units follow at residues 9–43, 44–78, 79–113, 115–149, 150–184, and 185–219; these read DILT…GLRP, DEKI…ELKA, SEEV…SDGP, SFEA…GHKP, DDKC…GIEI, and GVIT…GEAP.

Belongs to the PPR family. P subfamily.

This chain is Pentatricopeptide repeat-containing protein At1g19525, found in Arabidopsis thaliana (Mouse-ear cress).